Reading from the N-terminus, the 289-residue chain is 33 kDa chaperonin (289 aa).

Disulfide bonds link Cys-229–Cys-231 and Cys-262–Cys-265.

It belongs to the HSP33 family. Post-translationally, under oxidizing conditions two disulfide bonds are formed involving the reactive cysteines. Under reducing conditions zinc is bound to the reactive cysteines and the protein is inactive.

It is found in the cytoplasm. Redox regulated molecular chaperone. Protects both thermally unfolding and oxidatively damaged proteins from irreversible aggregation. Plays an important role in the bacterial defense system toward oxidative stress. The sequence is that of 33 kDa chaperonin from Pectobacterium carotovorum subsp. carotovorum (strain PC1).